The primary structure comprises 185 residues: Elongation factor P (185 aa).

The protein belongs to the elongation factor P family.

It localises to the cytoplasm. It functions in the pathway protein biosynthesis; polypeptide chain elongation. Functionally, involved in peptide bond synthesis. Stimulates efficient translation and peptide-bond synthesis on native or reconstituted 70S ribosomes in vitro. Probably functions indirectly by altering the affinity of the ribosome for aminoacyl-tRNA, thus increasing their reactivity as acceptors for peptidyl transferase. This is Elongation factor P from Bordetella avium (strain 197N).